Consider the following 64-residue polypeptide: Copper-specific metallothionein-2 (64 aa).

The Cu(+) site is built by Cys-3, Cys-5, Cys-9, Cys-11, Cys-16, Cys-18, Cys-22, Cys-24, Cys-27, Cys-33, Cys-40, Cys-44, Cys-50, Cys-52, Cys-56, and Cys-58.

It belongs to the metallothionein superfamily. Type 2 family.

Its function is as follows. The metallothioneins are involved in the cellular sequestration of toxic metal ions and regulation of essential trace elements. This isoform binds exclusively copper. The protein is Copper-specific metallothionein-2 of Callinectes sapidus (Blue crab).